Here is a 134-residue protein sequence, read N- to C-terminus: MSWQAYVDDHLMCDIEGHEDHRLTAAAIVGHDGSVWAQSATFPQFKPEEMNGIMTDFNEPGHLAPTGLHLGGTKYMVIQGEAGAVIRGKKGSGGITIKKTGQALVFGIYEEPVTPGQCNMVVERLGDYLLEQGL.

Cys13 and Cys118 are joined by a disulfide. Residues 84-100 carry the Involved in PIP2 interaction motif; that stretch reads AVIRGKKGSGGITIKKT. Thr114 bears the Phosphothreonine mark.

It belongs to the profilin family. Occurs in many kinds of cells as a complex with monomeric actin in a 1:1 ratio. Post-translationally, phosphorylated by MAP kinases.

The protein localises to the cytoplasm. The protein resides in the cytoskeleton. Its function is as follows. Binds to actin and affects the structure of the cytoskeleton. At high concentrations, profilin prevents the polymerization of actin, whereas it enhances it at low concentrations. The chain is Profilin-4 from Olea europaea (Common olive).